We begin with the raw amino-acid sequence, 256 residues long: Ribosomal RNA small subunit methyltransferase A (256 aa).

6 residues coordinate S-adenosyl-L-methionine: histidine 12, leucine 14, glycine 39, glutamate 60, aspartate 83, and asparagine 101.

The protein belongs to the class I-like SAM-binding methyltransferase superfamily. rRNA adenine N(6)-methyltransferase family. RsmA subfamily.

It is found in the cytoplasm. The enzyme catalyses adenosine(1518)/adenosine(1519) in 16S rRNA + 4 S-adenosyl-L-methionine = N(6)-dimethyladenosine(1518)/N(6)-dimethyladenosine(1519) in 16S rRNA + 4 S-adenosyl-L-homocysteine + 4 H(+). Its function is as follows. Specifically dimethylates two adjacent adenosines (A1518 and A1519) in the loop of a conserved hairpin near the 3'-end of 16S rRNA in the 30S particle. May play a critical role in biogenesis of 30S subunits. The chain is Ribosomal RNA small subunit methyltransferase A from Nitrosomonas eutropha (strain DSM 101675 / C91 / Nm57).